A 364-amino-acid polypeptide reads, in one-letter code: Mannonate dehydratase (364 aa).

Belongs to the mannonate dehydratase family. Requires Fe(2+) as cofactor. Mn(2+) serves as cofactor.

The catalysed reaction is D-mannonate = 2-dehydro-3-deoxy-D-gluconate + H2O. Its pathway is carbohydrate metabolism; pentose and glucuronate interconversion. Catalyzes the dehydration of D-mannonate. The protein is Mannonate dehydratase of Streptococcus equi subsp. zooepidemicus (strain MGCS10565).